A 500-amino-acid chain; its full sequence is Protein ASPARTIC PROTEASE IN GUARD CELL 1 (500 aa).

Residues methionine 1 to alanine 24 form the signal peptide. A Peptidase A1 domain is found at tyrosine 162–serine 496. Aspartate 180 is a catalytic residue. Cystine bridges form between cysteine 190–cysteine 193, cysteine 196–cysteine 271, cysteine 217–cysteine 235, cysteine 222–cysteine 230, cysteine 307–cysteine 500, and cysteine 419–cysteine 461. Aspartate 379 is a catalytic residue.

It belongs to the peptidase A1 family. As to expression, expressed in young seedlings, leaves, guard-cells, stems, flowers and siliques, but not in roots or mesophyll cells.

The protein resides in the endoplasmic reticulum. Inhibited by pepstatin A. Its function is as follows. Aspartic protease involved in drought avoidance through abscisic acid signaling. The polypeptide is Protein ASPARTIC PROTEASE IN GUARD CELL 1 (ASPG1) (Arabidopsis thaliana (Mouse-ear cress)).